The chain runs to 475 residues: ATP synthase subunit beta (475 aa).

155 to 162 (GGAGVGKT) contacts ATP.

The protein belongs to the ATPase alpha/beta chains family. As to quaternary structure, F-type ATPases have 2 components, CF(1) - the catalytic core - and CF(0) - the membrane proton channel. CF(1) has five subunits: alpha(3), beta(3), gamma(1), delta(1), epsilon(1). CF(0) has three main subunits: a(1), b(2) and c(9-12). The alpha and beta chains form an alternating ring which encloses part of the gamma chain. CF(1) is attached to CF(0) by a central stalk formed by the gamma and epsilon chains, while a peripheral stalk is formed by the delta and b chains.

The protein resides in the cell inner membrane. It catalyses the reaction ATP + H2O + 4 H(+)(in) = ADP + phosphate + 5 H(+)(out). Functionally, produces ATP from ADP in the presence of a proton gradient across the membrane. The catalytic sites are hosted primarily by the beta subunits. This Rhizobium etli (strain CIAT 652) protein is ATP synthase subunit beta.